Consider the following 787-residue polypeptide: Serine proteinase stubble (787 aa).

Positions 1 to 22 (MKQPTLIRPRLRHRRSTPAAAT) are disordered. At 1-58 (MKQPTLIRPRLRHRRSTPAAATKMCPKRHWLVNNRAAGSRGSGGAAARSRRSLDQIVE) the chain is on the cytoplasmic side. Residues 59–80 (VLVALIVVNCLATAAAALITPP) traverse the membrane as a helical; Signal-anchor for type II membrane protein segment. Residues 81–787 (DSLESLGSLG…FTPWILEHVR (707 aa)) are Extracellular-facing. An N-linked (GlcNAc...) asparagine glycan is attached at N177. The disordered stretch occupies residues 225–516 (AGTLVIRPSG…EISDSSIPDA (292 aa)). 5 stretches are compositionally biased toward low complexity: residues 262-280 (SASH…NPNS), 287-303 (QQQQ…NHWQ), 358-368 (PSTSTSTTSTS), 393-438 (SLAA…RTTT), and 449-485 (TTAT…VTSS). A compositionally biased stretch (polar residues) spans 502 to 512 (GIETNEISDSS). Intrachain disulfides connect C532-C660 and C575-C591. The Peptidase S1 domain maps to 544–787 (IVGGKSAAFG…FTPWILEHVR (244 aa)). Catalysis depends on charge relay system residues H590 and D640. N672 is a glycosylation site (N-linked (GlcNAc...) asparagine). 2 disulfide bridges follow: C704-C723 and C734-C763. S738 acts as the Charge relay system in catalysis.

The protein belongs to the peptidase S1 family. May activate itself by proteolytic cleavage.

It is found in the membrane. In terms of biological role, hormone dependent protease required for epithelial morphogenesis, including the formation of bristles, legs, and wings. Has a dual function, detaches imaginal disk cells from extracellular matrices through its extracellular proteolytic domain and transmits an outside-to-inside signal to its intracellular domain to modify the cytoskeleton during morphogenesis. The sequence is that of Serine proteinase stubble (Sb) from Drosophila melanogaster (Fruit fly).